The sequence spans 72 residues: Conotoxin Ep11.1 (72 aa).

The first 19 residues, 1–19 (MKLCVTFLLILVILPSVTG), serve as a signal peptide directing secretion. The propeptide occupies 20–32 (EKSSKRTLSGAAL). 4 cysteine pairs are disulfide-bonded: Cys-39–Cys-53, Cys-46–Cys-58, Cys-52–Cys-63, and Cys-57–Cys-70.

It belongs to the conotoxin I1 superfamily. As to expression, expressed by the venom duct.

The protein resides in the secreted. The protein is Conotoxin Ep11.1 of Conus episcopatus (Bishop's cone).